The sequence spans 434 residues: Pancreatic lipase-related protein 2 (434 aa).

A disulfide bond links cysteine 4 and cysteine 10. The segment at 76–88 (IHGFTDSGENSWL) is required for galactolipase activity. Cysteine 92 and cysteine 103 are disulfide-bonded. The active-site Nucleophile is serine 154. Aspartate 178 acts as the Charge relay system in catalysis. 4 residues coordinate Ca(2+): glutamate 189, arginine 192, aspartate 194, and aspartate 197. Cysteine 239 and cysteine 245 are oxidised to a cystine. The segment at 240–244 (KTGIS) is required for galactolipase activity. Histidine 247 functions as the Charge relay system in the catalytic mechanism. 2 disulfide bridges follow: cysteine 269/cysteine 280 and cysteine 283/cysteine 288. N-linked (GlcNAc...) asparagine glycosylation is present at asparagine 318. A PLAT domain is found at 322 to 434 (WRYKVTVTLS…ENVEQTLSPC (113 aa)). Cysteine 418 and cysteine 434 form a disulfide bridge.

It belongs to the AB hydrolase superfamily. Lipase family. As to expression, pancreas.

Its subcellular location is the secreted. The protein resides in the zymogen granule membrane. It is found in the cell projection. It localises to the neuron projection. The catalysed reaction is a triacylglycerol + H2O = a diacylglycerol + a fatty acid + H(+). It carries out the reaction a 1,2-diacyl-3-O-(beta-D-galactosyl)-sn-glycerol + 2 H2O = 3-beta-D-galactosyl-sn-glycerol + 2 a fatty acid + 2 H(+). It catalyses the reaction 1,2,3-tri-(9Z-octadecenoyl)-glycerol + H2O = di-(9Z)-octadecenoylglycerol + (9Z)-octadecenoate + H(+). The enzyme catalyses di-(9Z)-octadecenoylglycerol + H2O = (9Z-octadecenoyl)-glycerol + (9Z)-octadecenoate + H(+). The catalysed reaction is (9Z-octadecenoyl)-glycerol + H2O = glycerol + (9Z)-octadecenoate + H(+). It carries out the reaction 1-(9Z-octadecenoyl)-glycerol + H2O = glycerol + (9Z)-octadecenoate + H(+). It catalyses the reaction 1,2,3-tripropanoylglycerol + H2O = dipropanoylglycerol + propanoate + H(+). The enzyme catalyses 1,2,3-tributanoylglycerol + H2O = dibutanoylglycerol + butanoate + H(+). The catalysed reaction is 1,2,3-trioctanoylglycerol + H2O = dioctanoylglycerol + octanoate + H(+). It carries out the reaction 1,2-didecanoylglycerol + H2O = decanoylglycerol + decanoate + H(+). It catalyses the reaction long chain 1,2-diacyl-3-O-beta-D-galactosyl-sn-glycerol + H2O = long chain acyl-3-O-beta-D-galactosyl-sn-glycerol + a fatty acid + H(+). The enzyme catalyses 1,2-dioctanoyl-3-O-beta-D-galactosyl-sn-glycerol + H2O = octanoyl-3-(beta-D-galactosyl)-sn-glycerol + octanoate + H(+). The catalysed reaction is 1,2-didodecanoyl-3-beta-D-galactosyl-sn-glycerol + H2O = dodecanoyl-3-beta-D-galactosyl-sn-glycerol + dodecanoate + H(+). It carries out the reaction 1-beta-D-galactosyl-2,3-didodecanoyl-sn-glycerol + H2O = 1-beta-D-galactosyl-dodecanoyl-sn-glycerol + dodecanoate + H(+). It catalyses the reaction a 1,2-diacyl-3-O-[alpha-D-galactosyl-(1-&gt;6)-beta-D-galactosyl]-sn-glycerol + H2O = acyl-3-O-[alpha-D-galactosyl-(1-&gt;6)-beta-D-galactosyl]-sn-glycerol + a fatty acid + H(+). The enzyme catalyses long chain 1,2-diacyl-3-O-[alpha-D-galactosyl-(1-&gt;6)-beta-D-galactosyl]-sn-glycerol + H2O = long chain acyl-3-O-[alpha-D-galactosyl-(1-&gt;6)-beta-D-galactosyl]-sn-glycerol + a fatty acid + H(+). The catalysed reaction is 1,2-dioctanoyl-3-O-[alpha-D-galactosyl-(1-&gt;6)-beta-D-galactosyl]-sn-glycerol + H2O = octanoyl-3-O-[alpha-D-galactosyl-(1-&gt;6)-beta-D-galactosyl]-sn-glycerol + octanoate + H(+). It carries out the reaction 1,2-didodecanoyl-3-O-[alpha-D-galactosyl-(1-&gt;6)-beta-D-galactosyl]-sn-glycerol + H2O = dodecanoyl-3-O-[alpha-D-galactosyl-(1-&gt;6)-beta-D-galactosyl]-sn-glycerol + dodecanoate + H(+). It catalyses the reaction a 1,2-diacyl-sn-glycero-3-phosphocholine + H2O = a monoacyl-sn-glycero-3-phosphocholine + a fatty acid + H(+). Its pathway is glycerolipid metabolism; triacylglycerol degradation. It participates in glycolipid metabolism. Its activity is regulated as follows. CLPS stimulates triacylglycerol lipase activity. Not inhibited by bile salts. In terms of biological role, lipase that primarily hydrolyzes triglycerides and galactosylglycerides. In neonates, may play a major role in pancreatic digestion of dietary fats such as milk fat globules enriched in long-chain triglycerides. Hydrolyzes short-, medium- and long-chain fatty acyls in triglycerides without apparent positional specificity. Can completely deacylate triacylglycerols. When the liver matures and bile salt synthesis increases, likely functions mainly as a galactolipase and monoacylglycerol lipase. Hydrolyzes monogalactosyldiglycerols (MGDG) and digalactosyldiacylglycerols (DGDG) present in a plant-based diet, releasing long-chain polyunsaturated fatty acids. Hydrolyzes medium- and long-chain fatty acyls in galactolipids. May act together with LIPF to hydrolyze partially digested triglycerides. Hydrolyzes long-chain monoglycerides with high efficiency. In cytotoxic T cells, contributes to perforin-dependent cell lysis, but is unlikely to mediate direct cytotoxicity. Also has low phospholipase activity. In neurons, required for the localization of the phospholipid 1-oleoyl-2-palmitoyl-PC (OPPC) to neurite tips through acyl chain remodeling of membrane phospholipids. The resulting OPPC-rich lipid membrane domain recruits the t-SNARE protein STX4 by selectively interacting with the STX4 transmembrane domain and this promotes surface expression of the dopamine transporter SLC6A3/DAT at neurite tips by facilitating fusion of SLC6A3-containing transport vesicles with the plasma membrane. The chain is Pancreatic lipase-related protein 2 from Cavia porcellus (Guinea pig).